The chain runs to 466 residues: Uronate isomerase (466 aa).

This sequence belongs to the metallo-dependent hydrolases superfamily. Uronate isomerase family.

It carries out the reaction D-glucuronate = D-fructuronate. The catalysed reaction is aldehydo-D-galacturonate = keto-D-tagaturonate. Its pathway is carbohydrate metabolism; pentose and glucuronate interconversion. The sequence is that of Uronate isomerase from Streptococcus agalactiae serotype V (strain ATCC BAA-611 / 2603 V/R).